A 661-amino-acid chain; its full sequence is Hemocyanin C chain (661 aa).

A disulfide bond links Cys3 and Cys557. Cu cation-binding residues include His200, His204, His230, His350, His354, and His390. An N-linked (GlcNAc...) asparagine glycan is attached at Asn476.

This sequence belongs to the tyrosinase family. Hemocyanin subfamily. Hexamer of a number of different chains, of which A, B, and C have been identified. In terms of tissue distribution, hemolymph.

The protein resides in the secreted. The protein localises to the extracellular space. Functionally, hemocyanins are copper-containing oxygen carriers occurring freely dissolved in the hemolymph of many mollusks and arthropods. This Panulirus interruptus (California spiny lobster) protein is Hemocyanin C chain.